The chain runs to 152 residues: Large ribosomal subunit protein bL21 (152 aa).

The disordered stretch occupies residues 115 to 152; it reads VTSISNGEKPKKATTSAKPNTKKPSTAVKSSKVEKTPE. Over residues 127–143 the composition is skewed to polar residues; the sequence is ATTSAKPNTKKPSTAVK.

The protein belongs to the bacterial ribosomal protein bL21 family. Part of the 50S ribosomal subunit. Contacts protein L20.

This protein binds to 23S rRNA in the presence of protein L20. This is Large ribosomal subunit protein bL21 from Prochlorococcus marinus (strain SARG / CCMP1375 / SS120).